Consider the following 499-residue polypeptide: Cytochrome P450 11B1, mitochondrial (499 aa).

A mitochondrion-targeting transit peptide spans 1–24 (MALRVTADVWLARPWQCLHRTRAL). C446 is a binding site for heme.

It belongs to the cytochrome P450 family. It depends on heme as a cofactor. As to expression, adrenal zona fasciculata/reticularis.

The protein resides in the mitochondrion inner membrane. It catalyses the reaction a steroid + 2 reduced [adrenodoxin] + O2 + 2 H(+) = an 11beta-hydroxysteroid + 2 oxidized [adrenodoxin] + H2O. It carries out the reaction 21-hydroxyprogesterone + 2 reduced [adrenodoxin] + O2 + 2 H(+) = corticosterone + 2 oxidized [adrenodoxin] + H2O. The enzyme catalyses 21-hydroxyprogesterone + 2 reduced [adrenodoxin] + O2 + 2 H(+) = 18-hydroxy-11-deoxycorticosterone + 2 oxidized [adrenodoxin] + H2O. The catalysed reaction is 21-hydroxyprogesterone + 2 reduced [adrenodoxin] + O2 + 2 H(+) = 19-hydroxy-11-deoxycorticosterone + 2 oxidized [adrenodoxin] + H2O. It catalyses the reaction 11-deoxycortisol + 2 reduced [adrenodoxin] + O2 + 2 H(+) = cortisol + 2 oxidized [adrenodoxin] + H2O. It carries out the reaction cortisol + 2 reduced [adrenodoxin] + O2 + 2 H(+) = 18-hydroxycortisol + 2 oxidized [adrenodoxin] + H2O. The enzyme catalyses 11-deoxycortisol + 2 reduced [adrenodoxin] + O2 + 2 H(+) = 18-hydroxy-11-deoxycortisol + 2 oxidized [adrenodoxin] + H2O. It functions in the pathway steroid biosynthesis; glucocorticoid biosynthesis. It participates in steroid hormone biosynthesis. A cytochrome P450 monooxygenase involved in the biosynthesis of adrenal corticoids. Catalyzes a variety of reactions that are essential for many species, including detoxification, defense, and the formation of endogenous chemicals like steroid hormones. Steroid 11beta, 18- and 19-hydroxylase with preferred regioselectivity at 11beta, then 18, and lastly 19. Catalyzes the hydroxylation of 11-deoxycortisol and 11-deoxycorticosterone (21-hydroxyprogesterone) at 11beta position, yielding cortisol or corticosterone, respectively, but cannot produce aldosterone. Mechanistically, uses molecular oxygen inserting one oxygen atom into a substrate for hydroxylation and reducing the second into a water molecule. Two electrons are provided by NADPH via a two-protein mitochondrial transfer system comprising flavoprotein FDXR (adrenodoxin/ferredoxin reductase) and nonheme iron-sulfur protein FDX1 or FDX2 (adrenodoxin/ferredoxin). Due to its lack of 18-oxidation activity, it is incapable of generating aldosterone. Could also be involved in the androgen metabolic pathway. The polypeptide is Cytochrome P450 11B1, mitochondrial (Cyp11b1) (Rattus norvegicus (Rat)).